Reading from the N-terminus, the 200-residue chain is GTP cyclohydrolase 1 (200 aa).

Zn(2+) is bound by residues Cys87, His90, and Cys158.

The protein belongs to the GTP cyclohydrolase I family. Toroid-shaped homodecamer, composed of two pentamers of five dimers.

The enzyme catalyses GTP + H2O = 7,8-dihydroneopterin 3'-triphosphate + formate + H(+). It participates in cofactor biosynthesis; 7,8-dihydroneopterin triphosphate biosynthesis; 7,8-dihydroneopterin triphosphate from GTP: step 1/1. The polypeptide is GTP cyclohydrolase 1 (Xanthomonas axonopodis pv. citri (strain 306)).